Here is a 557-residue protein sequence, read N- to C-terminus: Enhancer of polycomb-like protein 1 (557 aa).

2 disordered regions span residues 323–349 (VKPA…RPQP) and 424–449 (QSHN…TYST). Over residues 327-337 (APVPTPAPPVK) the composition is skewed to pro residues. A compositionally biased stretch (low complexity) spans 429–441 (LSIPSSTPSTPLS).

Belongs to the enhancer of polycomb family. Component of the NuA4 histone acetyltransferase complex.

It is found in the nucleus. Its function is as follows. Component of the NuA4 histone acetyltransferase complex which is involved in transcriptional activation of selected genes principally by acetylation of nucleosomal histone H4 and H2A. The NuA4 complex is also involved in DNA repair. Involved in gene silencing by neighboring heterochromatin, blockage of the silencing spreading along the chromosome, and required for cell cycle progression through G2/M. The chain is Enhancer of polycomb-like protein 1 (epl1) from Schizosaccharomyces pombe (strain 972 / ATCC 24843) (Fission yeast).